Here is a 367-residue protein sequence, read N- to C-terminus: Glutamate 5-kinase (367 aa).

K10 contributes to the ATP binding site. 3 residues coordinate substrate: S50, D137, and N149. Residues 169-170 (TD) and 211-217 (TGGMSTK) contribute to the ATP site. The PUA domain maps to 275 to 353 (AGEITVDEGA…QEIDAILGYE (79 aa)).

Belongs to the glutamate 5-kinase family.

It is found in the cytoplasm. The enzyme catalyses L-glutamate + ATP = L-glutamyl 5-phosphate + ADP. It functions in the pathway amino-acid biosynthesis; L-proline biosynthesis; L-glutamate 5-semialdehyde from L-glutamate: step 1/2. Catalyzes the transfer of a phosphate group to glutamate to form L-glutamate 5-phosphate. In Escherichia coli O81 (strain ED1a), this protein is Glutamate 5-kinase.